Consider the following 78-residue polypeptide: Probable [Fe-S]-dependent transcriptional repressor (78 aa).

Iron-sulfur cluster is bound by residues Cys56, Cys61, Cys64, and Cys70.

The protein belongs to the FeoC family.

In terms of biological role, may function as a transcriptional regulator that controls feoABC expression. The chain is Probable [Fe-S]-dependent transcriptional repressor from Escherichia coli O17:K52:H18 (strain UMN026 / ExPEC).